The following is an 89-amino-acid chain: Small ribosomal subunit protein bS20 (89 aa).

It belongs to the bacterial ribosomal protein bS20 family.

Functionally, binds directly to 16S ribosomal RNA. The protein is Small ribosomal subunit protein bS20 of Helicobacter pylori (strain ATCC 700392 / 26695) (Campylobacter pylori).